The sequence spans 65 residues: Keratin-associated protein 23-1 (65 aa).

In terms of assembly, interacts with hair keratins.

Its function is as follows. In the hair cortex, hair keratin intermediate filaments are embedded in an interfilamentous matrix, consisting of hair keratin-associated proteins (KRTAP), which are essential for the formation of a rigid and resistant hair shaft through their extensive disulfide bond cross-linking with abundant cysteine residues of hair keratins. The matrix proteins include the high-sulfur and high-glycine-tyrosine keratins. This chain is Keratin-associated protein 23-1 (KRTAP23-1), found in Homo sapiens (Human).